The sequence spans 261 residues: Vacuolar protein sorting-associated protein 37D (261 aa).

One can recognise a VPS37 C-terminal domain in the interval 93-182; sequence AENCADKLQR…RRRERSAQPA (90 aa). Positions 172 to 261 are disordered; it reads LRRRERSAQP…RPSQPEPPHR (90 aa). Residues 181 to 195 are compositionally biased toward low complexity; sequence PAPTTAAAAAAAATA. Composition is skewed to pro residues over residues 215-224 and 231-261; these read GPPPAVPRSL and PVPP…PPHR.

Belongs to the VPS37 family. Component of the ESCRT-I complex (endosomal sorting complex required for transport I) which consists of TSG101, VPS28, a VPS37 protein (VPS37A to -D) and MVB12A or MVB12B in a 1:1:1:1 stoichiometry. Interacts with TSG101 and MVB12A. Component of the ESCRT-I complex (endosomal sorting complex required for transport I) which consists of TSG101, VPS28, a VPS37 protein (VPS37A to -D) and UBAP1 in a 1:1:1:1 stoichiometry.

It localises to the late endosome membrane. Its function is as follows. Component of the ESCRT-I complex, a regulator of vesicular trafficking process. Required for the sorting of endocytic ubiquitinated cargos into multivesicular bodies. May be involved in cell growth and differentiation. The polypeptide is Vacuolar protein sorting-associated protein 37D (Mus musculus (Mouse)).